Consider the following 433-residue polypeptide: 23S rRNA (uracil(1939)-C(5))-methyltransferase RlmD (433 aa).

The TRAM domain occupies 10-68 (RTTTRQIITVSVNDLDSFGQGVARHNGKTLFIPGLLPQENAEVTVTEDKKQYARAKVVR). Positions 81, 87, 90, and 162 each coordinate [4Fe-4S] cluster. 6 residues coordinate S-adenosyl-L-methionine: glutamine 265, phenylalanine 294, asparagine 299, glutamate 315, asparagine 342, and aspartate 363. The active-site Nucleophile is the cysteine 389.

This sequence belongs to the class I-like SAM-binding methyltransferase superfamily. RNA M5U methyltransferase family. RlmD subfamily.

The enzyme catalyses uridine(1939) in 23S rRNA + S-adenosyl-L-methionine = 5-methyluridine(1939) in 23S rRNA + S-adenosyl-L-homocysteine + H(+). Catalyzes the formation of 5-methyl-uridine at position 1939 (m5U1939) in 23S rRNA. This Shigella sonnei (strain Ss046) protein is 23S rRNA (uracil(1939)-C(5))-methyltransferase RlmD.